The sequence spans 117 residues: Ribosome-binding factor A (117 aa).

The protein belongs to the RbfA family. Monomer. Binds 30S ribosomal subunits, but not 50S ribosomal subunits or 70S ribosomes.

Its subcellular location is the cytoplasm. In terms of biological role, one of several proteins that assist in the late maturation steps of the functional core of the 30S ribosomal subunit. Associates with free 30S ribosomal subunits (but not with 30S subunits that are part of 70S ribosomes or polysomes). Required for efficient processing of 16S rRNA. May interact with the 5'-terminal helix region of 16S rRNA. The polypeptide is Ribosome-binding factor A (Syntrophobacter fumaroxidans (strain DSM 10017 / MPOB)).